The following is a 74-amino-acid chain: Large ribosomal subunit protein uL30 (74 aa).

Belongs to the universal ribosomal protein uL30 family. In terms of assembly, part of the 50S ribosomal subunit.

The polypeptide is Large ribosomal subunit protein uL30 (Micrococcus luteus (strain ATCC 4698 / DSM 20030 / JCM 1464 / CCM 169 / CCUG 5858 / IAM 1056 / NBRC 3333 / NCIMB 9278 / NCTC 2665 / VKM Ac-2230) (Micrococcus lysodeikticus)).